Reading from the N-terminus, the 3336-residue chain is Pericentrin (3336 aa).

Disordered stretches follow at residues 1–71 (MEVE…DICK) and 81–100 (GAGGAFAAQPEDCDGEKRED). A compositionally biased stretch (basic and acidic residues) spans 27-37 (TKGDSSHSEKK). Serine 44 is modified (phosphoserine). Serine 188 carries the post-translational modification Phosphoserine. Phosphothreonine is present on threonine 191. Positions 258–553 (HTAQLELTQA…RLQGAREDAL (296 aa)) form a coiled coil. A disordered region spans residues 569 to 589 (KPEKGRKDHVDELEPERHKES). 2 positions are modified to phosphoserine: serine 610 and serine 682. Coiled-coil stretches lie at residues 675-835 (TEHK…DALH) and 1010-1146 (TILT…MLKA). Serine 1245 is subject to Phosphoserine. Residues 1299-1949 (NEETAQVVRK…FLRCQVELDR (651 aa)) are a coiled coil. The disordered stretch occupies residues 1619-1638 (TLDAGRCPEPPSGSPPEGPE). Residues 1626-1636 (PEPPSGSPPEG) are compositionally biased toward pro residues. Phosphoserine occurs at positions 1653 and 1712. The disordered stretch occupies residues 1954–1974 (RATAHTRVPGAHPQPRMDGGA). At serine 2044 the chain carries Phosphoserine. A coiled-coil region spans residues 2064 to 2082 (VDLVAQVKQLQEKLNRLLY). The tract at residues 2168-2214 (SLIPDEMPDSPIQEKSECQDMSLSSPTSVLGGSRHQSHTAEAGPRKS) is disordered. Phosphoserine is present on residues serine 2177, serine 2192, serine 2225, serine 2226, and serine 2327. A compositionally biased stretch (polar residues) spans 2186–2197 (QDMSLSSPTSVL). The interval 2318 to 2374 (SFDSQETLSSPPPGLEGKADRSEKSDGSGFGARLSPGSGGPEAQTAGPVTPASISGR) is disordered. Positions 2334–2343 (GKADRSEKSD) are enriched in basic and acidic residues. Phosphoserine occurs at positions 2352, 2355, 2477, and 2486. Residues 2536 to 3086 (QEKLQHLRTA…EKLLKHHLQK (551 aa)) adopt a coiled-coil conformation. Disordered regions lie at residues 2875–2910 (LEQSHPRLKEQEGRKAARRSAEARQSPAAAEQWRKW) and 3084–3126 (LQKG…EEAH). 2 stretches are compositionally biased toward basic and acidic residues: residues 2876–2896 (EQSHPRLKEQEGRKAARRSAE) and 3092–3102 (RSERSAWKPDE). The segment at 2983 to 3246 (LSAARLLTSF…ARQPQSPPRT (264 aa)) is interaction with NEK2. Residues 3195–3208 (RFRTAVRVVIAILR) form a calmodulin-binding region. Residues 3224–3300 (ALAQGKAPRP…RSLTASQDPE (77 aa)) are disordered. The span at 3226-3240 (AQGKAPRPGPRARQP) shows a compositional bias: low complexity. The segment covering 3283 to 3297 (PSPNSRLERSLTASQ) has biased composition (polar residues). Phosphoserine is present on serine 3302.

In terms of assembly, interacts with CHD3. Interacts with CHD4; the interaction regulates centrosome integrity. Interacts with DISC1 and PCM1. Binds calmodulin. Interacts with CDK5RAP2; the interaction is leading to centrosomal localization of PCNT and CDK5RAP2. Interacts with isoform 1 of NEK2. Interacts with CEP131. Interacts with CCDC13. Interacts with CEP68. Interacts with ATF5; the ATF5:PCNT:polyglutamylated tubulin (PGT) tripartite unites the mother centriole and the pericentriolar material (PCM) in the centrosome. Cleaved during mitotis which leads to removal of CDK5RAP2 from the centrosome and promotes centriole disengagement and subsequent centriole separation. The C-terminal fragment is rapidly degraded following cleavage. Post-translationally, ubiquitinated by TRIM43; leading to proteasomal degradation. In terms of tissue distribution, expressed in all tissues tested, including placenta, liver, kidney and thymus.

Its subcellular location is the cytoplasm. The protein localises to the cytoskeleton. It localises to the microtubule organizing center. It is found in the centrosome. Its function is as follows. Integral component of the filamentous matrix of the centrosome involved in the initial establishment of organized microtubule arrays in both mitosis and meiosis. Plays a role, together with DISC1, in the microtubule network formation. Is an integral component of the pericentriolar material (PCM). May play an important role in preventing premature centrosome splitting during interphase by inhibiting NEK2 kinase activity at the centrosome. In Homo sapiens (Human), this protein is Pericentrin (PCNT).